We begin with the raw amino-acid sequence, 182 residues long: Adenylate kinase (182 aa).

Residue 12-17 participates in ATP binding; it reads GAGKGT. The tract at residues 32-61 is NMP; the sequence is STGELLRKEIDLDTYLGKQVKDIMNKGELV. AMP-binding positions include threonine 33, arginine 38, 59-61, 85-88, and glutamine 92; these read ELV and GYPR. Residues 126-132 form an LID region; the sequence is LRGRKDD. Arginine 127 is an ATP binding site. The AMP site is built by arginine 129 and arginine 140. An ATP-binding site is contributed by glycine 168.

It belongs to the adenylate kinase family. In terms of assembly, monomer.

Its subcellular location is the cytoplasm. It catalyses the reaction AMP + ATP = 2 ADP. Its pathway is purine metabolism; AMP biosynthesis via salvage pathway; AMP from ADP: step 1/1. In terms of biological role, catalyzes the reversible transfer of the terminal phosphate group between ATP and AMP. Plays an important role in cellular energy homeostasis and in adenine nucleotide metabolism. In Prochlorococcus marinus (strain MIT 9515), this protein is Adenylate kinase.